We begin with the raw amino-acid sequence, 180 residues long: Large ribosomal subunit protein uL15 (180 aa).

The segment at 1–62 (MKKERLEQAS…KTAGRGSKGQ (62 aa)) is disordered.

It belongs to the universal ribosomal protein uL15 family. As to quaternary structure, part of the 50S ribosomal subunit.

In terms of biological role, binds to the 23S rRNA. The chain is Large ribosomal subunit protein uL15 from Leptospira interrogans serogroup Icterohaemorrhagiae serovar copenhageni (strain Fiocruz L1-130).